Here is a 154-residue protein sequence, read N- to C-terminus: 6,7-dimethyl-8-ribityllumazine synthase (154 aa).

Residues Trp-22, 56–58, and 80–82 each bind 5-amino-6-(D-ribitylamino)uracil; these read SHE and AVI. 85-86 contacts (2S)-2-hydroxy-3-oxobutyl phosphate; that stretch reads DT. Residue His-88 is the Proton donor of the active site. Phe-113 contacts 5-amino-6-(D-ribitylamino)uracil. Arg-127 provides a ligand contact to (2S)-2-hydroxy-3-oxobutyl phosphate.

The protein belongs to the DMRL synthase family.

The enzyme catalyses (2S)-2-hydroxy-3-oxobutyl phosphate + 5-amino-6-(D-ribitylamino)uracil = 6,7-dimethyl-8-(1-D-ribityl)lumazine + phosphate + 2 H2O + H(+). It functions in the pathway cofactor biosynthesis; riboflavin biosynthesis; riboflavin from 2-hydroxy-3-oxobutyl phosphate and 5-amino-6-(D-ribitylamino)uracil: step 1/2. In terms of biological role, catalyzes the formation of 6,7-dimethyl-8-ribityllumazine by condensation of 5-amino-6-(D-ribitylamino)uracil with 3,4-dihydroxy-2-butanone 4-phosphate. This is the penultimate step in the biosynthesis of riboflavin. The protein is 6,7-dimethyl-8-ribityllumazine synthase of Deinococcus geothermalis (strain DSM 11300 / CIP 105573 / AG-3a).